The primary structure comprises 524 residues: Ribosomal protein uS12 methylthiotransferase RimO (524 aa).

The span at 20 to 31 (NSQTASDSTQPA) shows a compositional bias: polar residues. The disordered stretch occupies residues 20–59 (NSQTASDSTQPAASAYHHKANHNQNRSIEQSAQQAAEQSL). A compositionally biased stretch (low complexity) spans 48–58 (EQSAQQAAEQS). The 111-residue stretch at 67 to 177 (PKVGFVSLGC…VITAVSTHAP (111 aa)) folds into the MTTase N-terminal domain. [4Fe-4S] cluster is bound by residues Cys76, Cys112, Cys141, Cys216, Cys220, and Cys223. One can recognise a Radical SAM core domain in the interval 202-443 (LTPSHYAYLK…MAVQQQISEQ (242 aa)). Residues 446-519 (QEKVGKTMTV…EYDLFASYDA (74 aa)) enclose the TRAM domain.

Belongs to the methylthiotransferase family. RimO subfamily. Requires [4Fe-4S] cluster as cofactor.

It localises to the cytoplasm. The catalysed reaction is L-aspartate(89)-[ribosomal protein uS12]-hydrogen + (sulfur carrier)-SH + AH2 + 2 S-adenosyl-L-methionine = 3-methylsulfanyl-L-aspartate(89)-[ribosomal protein uS12]-hydrogen + (sulfur carrier)-H + 5'-deoxyadenosine + L-methionine + A + S-adenosyl-L-homocysteine + 2 H(+). Catalyzes the methylthiolation of an aspartic acid residue of ribosomal protein uS12. The polypeptide is Ribosomal protein uS12 methylthiotransferase RimO (Psychrobacter sp. (strain PRwf-1)).